Here is a 322-residue protein sequence, read N- to C-terminus: Succinate/fumarate mitochondrial transporter (322 aa).

Solcar repeat units follow at residues 8-99 (SHPA…YRTL), 111-202 (GNTF…LKEF), and 212-303 (LPSW…VREH). 6 helical membrane-spanning segments follow: residues 11-31 (AINL…CHPL), 68-88 (FLAL…KMAI), 114-134 (FVAG…PMEV), 177-193 (GVSL…GANF), 219-235 (CIGL…NAPL), and 278-295 (GITP…VTFT).

Belongs to the mitochondrial carrier (TC 2.A.29) family.

It is found in the mitochondrion inner membrane. Functionally, transports cytoplasmic succinate, derived from isocitrate by the action of isocitrate lyase in the cytosol, into the mitochondrial matrix in exchange for fumarate. This chain is Succinate/fumarate mitochondrial transporter (SFC1), found in Saccharomyces cerevisiae (strain ATCC 204508 / S288c) (Baker's yeast).